We begin with the raw amino-acid sequence, 166 residues long: MKVILKEDFTNLGREGDTVEVKDGFARNYLLPKGFAVFSNKHNVEIFNQKKRSILKKQETKKQIANDLKSKLDLVKLEFFMKSNDSGKLFHSINSLNIAEELLKLGFDIERKKIDIHHGTLKAFGTYDVTVKLYEGISAIIKVEIKKEKKQEDKKSLNKKLNKVDE.

It belongs to the bacterial ribosomal protein bL9 family.

Binds to the 23S rRNA. In Borrelia garinii subsp. bavariensis (strain ATCC BAA-2496 / DSM 23469 / PBi) (Borreliella bavariensis), this protein is Large ribosomal subunit protein bL9.